We begin with the raw amino-acid sequence, 283 residues long: 4-diphosphocytidyl-2-C-methyl-D-erythritol kinase (283 aa).

Lys-10 is an active-site residue. Position 95 to 105 (95 to 105) interacts with ATP; it reads PVAAGLGGGSS. The active site involves Asp-137.

The protein belongs to the GHMP kinase family. IspE subfamily.

The catalysed reaction is 4-CDP-2-C-methyl-D-erythritol + ATP = 4-CDP-2-C-methyl-D-erythritol 2-phosphate + ADP + H(+). It functions in the pathway isoprenoid biosynthesis; isopentenyl diphosphate biosynthesis via DXP pathway; isopentenyl diphosphate from 1-deoxy-D-xylulose 5-phosphate: step 3/6. In terms of biological role, catalyzes the phosphorylation of the position 2 hydroxy group of 4-diphosphocytidyl-2C-methyl-D-erythritol. The polypeptide is 4-diphosphocytidyl-2-C-methyl-D-erythritol kinase (Limosilactobacillus fermentum (strain NBRC 3956 / LMG 18251) (Lactobacillus fermentum)).